Here is a 158-residue protein sequence, read N- to C-terminus: Large ribosomal subunit protein uL30 (158 aa).

Belongs to the universal ribosomal protein uL30 family. Part of the 50S ribosomal subunit.

The sequence is that of Large ribosomal subunit protein uL30 from Saccharolobus islandicus (strain Y.G.57.14 / Yellowstone #1) (Sulfolobus islandicus).